We begin with the raw amino-acid sequence, 577 residues long: Proline--tRNA ligase (577 aa).

This sequence belongs to the class-II aminoacyl-tRNA synthetase family. ProS type 1 subfamily. In terms of assembly, homodimer.

Its subcellular location is the cytoplasm. It catalyses the reaction tRNA(Pro) + L-proline + ATP = L-prolyl-tRNA(Pro) + AMP + diphosphate. In terms of biological role, catalyzes the attachment of proline to tRNA(Pro) in a two-step reaction: proline is first activated by ATP to form Pro-AMP and then transferred to the acceptor end of tRNA(Pro). As ProRS can inadvertently accommodate and process non-cognate amino acids such as alanine and cysteine, to avoid such errors it has two additional distinct editing activities against alanine. One activity is designated as 'pretransfer' editing and involves the tRNA(Pro)-independent hydrolysis of activated Ala-AMP. The other activity is designated 'posttransfer' editing and involves deacylation of mischarged Ala-tRNA(Pro). The misacylated Cys-tRNA(Pro) is not edited by ProRS. This is Proline--tRNA ligase from Thermotoga sp. (strain RQ2).